Consider the following 120-residue polypeptide: NAD(P)H-quinone oxidoreductase subunit 3, chloroplastic (120 aa).

Helical transmembrane passes span 9–29, 64–84, and 88–108; these read IFWA…LISG, MFAL…PWAM, and VLGV…IVGS.

It belongs to the complex I subunit 3 family. In terms of assembly, NDH is composed of at least 16 different subunits, 5 of which are encoded in the nucleus.

The protein resides in the plastid. It is found in the chloroplast thylakoid membrane. It catalyses the reaction a plastoquinone + NADH + (n+1) H(+)(in) = a plastoquinol + NAD(+) + n H(+)(out). It carries out the reaction a plastoquinone + NADPH + (n+1) H(+)(in) = a plastoquinol + NADP(+) + n H(+)(out). Functionally, NDH shuttles electrons from NAD(P)H:plastoquinone, via FMN and iron-sulfur (Fe-S) centers, to quinones in the photosynthetic chain and possibly in a chloroplast respiratory chain. The immediate electron acceptor for the enzyme in this species is believed to be plastoquinone. Couples the redox reaction to proton translocation, and thus conserves the redox energy in a proton gradient. In Liriodendron tulipifera (Tuliptree), this protein is NAD(P)H-quinone oxidoreductase subunit 3, chloroplastic.